We begin with the raw amino-acid sequence, 76 residues long: Conotoxin Gla(1)-TxVI (76 aa).

The first 19 residues, 1 to 19, serve as a signal peptide directing secretion; the sequence is MEKLTILLLVAAVLMSTQA. The propeptide occupies 20–45; sequence LVERAGENHSKENINFLLKRKRAADR. Residue W48 is modified to 6'-bromotryptophan. E50 is modified (4-carboxyglutamate). Intrachain disulfides connect C51–C65, C58–C69, and C64–C73. P61 bears the 4-hydroxyproline mark. 3 positions are modified to 4-carboxyglutamate: E63, E67, and E70. W76 is modified (6'-bromotryptophan).

In terms of tissue distribution, expressed by the venom duct.

The protein localises to the secreted. The chain is Conotoxin Gla(1)-TxVI from Conus textile (Cloth-of-gold cone).